The chain runs to 89 residues: Large ribosomal subunit protein bL27 (89 aa).

The segment at 1–21 (MAHKKAGGSSRNGRDSAGRRL) is disordered.

The protein belongs to the bacterial ribosomal protein bL27 family.

In Novosphingobium aromaticivorans (strain ATCC 700278 / DSM 12444 / CCUG 56034 / CIP 105152 / NBRC 16084 / F199), this protein is Large ribosomal subunit protein bL27.